Consider the following 344-residue polypeptide: Small ribosomal subunit protein mS38 (344 aa).

Disordered stretches follow at residues 1 to 27, 43 to 101, and 325 to 344; these read MIPQ…ASSA, ALQK…SVPS, and KKYK…QDRL. Residues 51-74 are compositionally biased toward low complexity; the sequence is SSKPSSPDDGSSRAFAARASVPAA. Residues 325–338 are compositionally biased toward basic residues; the sequence is KKYKKLMRRTRNER.

It belongs to the mitochondrion-specific ribosomal protein mS38 family. Component of the mitochondrial small ribosomal subunit (mt-SSU). Mature N.crassa 74S mitochondrial ribosomes consist of a small (37S) and a large (54S) subunit. The 37S small subunit contains a 16S ribosomal RNA (16S mt-rRNA) and 32 different proteins. The 54S large subunit contains a 23S rRNA (23S mt-rRNA) and 42 different proteins.

It localises to the mitochondrion. Functionally, component of the mitochondrial ribosome (mitoribosome), a dedicated translation machinery responsible for the synthesis of mitochondrial genome-encoded proteins, including at least some of the essential transmembrane subunits of the mitochondrial respiratory chain. The mitoribosomes are attached to the mitochondrial inner membrane and translation products are cotranslationally integrated into the membrane. The protein is Small ribosomal subunit protein mS38 (cox24) of Neurospora crassa (strain ATCC 24698 / 74-OR23-1A / CBS 708.71 / DSM 1257 / FGSC 987).